The following is a 371-amino-acid chain: tRNA (guanine(26)-N(2))-dimethyltransferase (371 aa).

One can recognise a Trm1 methyltransferase domain in the interval 4 to 368 (IEVTEGRTTF…APLDAIAAAL (365 aa)). S-adenosyl-L-methionine contacts are provided by Arg41, Arg66, Asp82, Asp108, and Ala109. 4 residues coordinate Zn(2+): Cys237, Cys240, Cys256, and Cys259.

The protein belongs to the class I-like SAM-binding methyltransferase superfamily. Trm1 family.

The enzyme catalyses guanosine(26) in tRNA + 2 S-adenosyl-L-methionine = N(2)-dimethylguanosine(26) in tRNA + 2 S-adenosyl-L-homocysteine + 2 H(+). Functionally, dimethylates a single guanine residue at position 26 of a number of tRNAs using S-adenosyl-L-methionine as donor of the methyl groups. This chain is tRNA (guanine(26)-N(2))-dimethyltransferase, found in Methanosphaerula palustris (strain ATCC BAA-1556 / DSM 19958 / E1-9c).